Here is a 1202-residue protein sequence, read N- to C-terminus: DNA-directed RNA polymerase subunit beta (1202 aa).

The tract at residues 1154–1202 (NMDEDDDEVVNVDALAKYAEEHKADDKKNEEENKSEATSTTTDDKTNQN) is disordered. Basic and acidic residues predominate over residues 1171 to 1188 (YAEEHKADDKKNEEENKS).

The protein belongs to the RNA polymerase beta chain family. In terms of assembly, the RNAP catalytic core consists of 2 alpha, 1 beta, 1 beta' and 1 omega subunit. When a sigma factor is associated with the core the holoenzyme is formed, which can initiate transcription.

It carries out the reaction RNA(n) + a ribonucleoside 5'-triphosphate = RNA(n+1) + diphosphate. Its function is as follows. DNA-dependent RNA polymerase catalyzes the transcription of DNA into RNA using the four ribonucleoside triphosphates as substrates. In Limosilactobacillus reuteri (strain DSM 20016) (Lactobacillus reuteri), this protein is DNA-directed RNA polymerase subunit beta.